The primary structure comprises 162 residues: Ribonuclease P protein component (162 aa).

The disordered stretch occupies residues 1–67; the sequence is MDEKDLAAQP…GGKLVSLKGD (67 aa). Positions 21–31 are enriched in basic and acidic residues; sequence GPHEDPRRQEG.

The protein belongs to the RnpA family. As to quaternary structure, consists of a catalytic RNA component (M1 or rnpB) and a protein subunit.

It catalyses the reaction Endonucleolytic cleavage of RNA, removing 5'-extranucleotides from tRNA precursor.. RNaseP catalyzes the removal of the 5'-leader sequence from pre-tRNA to produce the mature 5'-terminus. It can also cleave other RNA substrates such as 4.5S RNA. The protein component plays an auxiliary but essential role in vivo by binding to the 5'-leader sequence and broadening the substrate specificity of the ribozyme. The polypeptide is Ribonuclease P protein component (Thermus brockianus).